The sequence spans 448 residues: Lipoamide acyltransferase component of branched-chain alpha-keto acid dehydrogenase complex, mitochondrial (448 aa).

The Lipoyl-binding domain occupies 30–105; the sequence is VVQFKLSDIG…RVGQALIDVE (76 aa). Lys71 is subject to N6-lipoyllysine. 2 disordered regions span residues 108 to 146 and 191 to 211; these read GNVEEPEQPKKEAASSSPEAPKSSAPKAPESAHSEGKVL and TSGSTNIRTTHQAPQPSSKSY. A compositionally biased stretch (low complexity) spans 121-136; that stretch reads ASSSPEAPKSSAPKAP. The region spanning 146–183 is the Peripheral subunit-binding (PSBD) domain; that stretch reads LATPAVRRIAIENKIKLAEVRGTGKDGRVLKEDVLKFL. Over residues 191–210 the composition is skewed to polar residues; that stretch reads TSGSTNIRTTHQAPQPSSKS. Positions 257, 272, 315, 365, 366, 390, and 392 each coordinate CoA. Catalysis depends on residues His418 and Asp422.

Belongs to the 2-oxoacid dehydrogenase family. Requires (R)-lipoate as cofactor. As to expression, ubiquitously expressed.

It is found in the mitochondrion matrix. It localises to the cytoplasm. The protein resides in the cytosol. The protein localises to the cell projection. Its subcellular location is the dendrite. It is found in the cilium. It carries out the reaction N(6)-[(R)-dihydrolipoyl]-L-lysyl-[protein] + 2-methylpropanoyl-CoA = N(6)-[(R)-S(8)-2-methylpropanoyldihydrolipoyl]-L-lysyl-[protein] + CoA. The branched-chain alpha-keto dehydrogenase complex catalyzes the overall conversion of alpha-keto acids to acyl-CoA and CO(2). It contains multiple copies of three enzymatic components: branched-chain alpha-keto acid decarboxylase (E1), lipoamide acyltransferase (E2) and lipoamide dehydrogenase (E3). Within this complex, the catalytic function of this enzyme is to accept, and to transfer to coenzyme A, acyl groups that are generated by the branched-chain alpha-keto acid decarboxylase component. Required for the catabolism of branched-chain amino acids and the subsequent synthesis of monomethyl branched-chain fatty acids, which are important for regulating postembryonic growth. The sequence is that of Lipoamide acyltransferase component of branched-chain alpha-keto acid dehydrogenase complex, mitochondrial from Caenorhabditis elegans.